The chain runs to 447 residues: Exodeoxyribonuclease 7 large subunit (447 aa).

Belongs to the XseA family. As to quaternary structure, heterooligomer composed of large and small subunits.

The protein resides in the cytoplasm. It catalyses the reaction Exonucleolytic cleavage in either 5'- to 3'- or 3'- to 5'-direction to yield nucleoside 5'-phosphates.. Functionally, bidirectionally degrades single-stranded DNA into large acid-insoluble oligonucleotides, which are then degraded further into small acid-soluble oligonucleotides. This is Exodeoxyribonuclease 7 large subunit from Streptococcus mutans serotype c (strain ATCC 700610 / UA159).